A 40-amino-acid chain; its full sequence is Bomanin Short 6 (40 aa).

The signal sequence occupies residues 1 to 18 (MKLLSITFLFGLLALASA). A propeptide spans 19 to 23 (NPLSP) (removed by a dipeptidylpeptidase). Cys-32 and Cys-35 are oxidised to a cystine.

The protein belongs to the bomanin family.

It is found in the secreted. Its function is as follows. Secreted immune-induced peptide induced by Toll signaling. Has a role in resistance to bacterial and fungal infections. The strength of antimicrobial activity appears to correlate with the overall level of expression. This chain is Bomanin Short 6, found in Drosophila melanogaster (Fruit fly).